A 380-amino-acid chain; its full sequence is Cytochrome b (380 aa).

The next 4 membrane-spanning stretches (helical) occupy residues 33–53 (FGSL…FLAM), 77–98 (WLIR…YLHI), 113–133 (WNVG…GYVL), and 178–198 (FFAF…IHLI). Histidine 83 and histidine 97 together coordinate heme b. The heme b site is built by histidine 182 and histidine 196. A ubiquinone is bound at residue histidine 201. 4 helical membrane-spanning segments follow: residues 226 to 246 (YKDL…ALFS), 288 to 308 (LGGV…PILH), 320 to 340 (FSQF…WIGG), and 347 to 367 (FVII…VMIP).

Belongs to the cytochrome b family. As to quaternary structure, the cytochrome bc1 complex contains 3 respiratory subunits (MT-CYB, CYC1 and UQCRFS1), 2 core proteins (UQCRC1 and UQCRC2) and probably 6 low-molecular weight proteins. Heme b serves as cofactor.

Its subcellular location is the mitochondrion inner membrane. Component of the ubiquinol-cytochrome c reductase complex (complex III or cytochrome b-c1 complex) that is part of the mitochondrial respiratory chain. The b-c1 complex mediates electron transfer from ubiquinol to cytochrome c. Contributes to the generation of a proton gradient across the mitochondrial membrane that is then used for ATP synthesis. The sequence is that of Cytochrome b (mt-cyb) from Paralichthys olivaceus (Bastard halibut).